The chain runs to 278 residues: Shikimate dehydrogenase (NADP(+)) (278 aa).

Shikimate contacts are provided by residues 14–16 (SKS) and Thr61. The active-site Proton acceptor is Lys65. Shikimate contacts are provided by Asn86 and Asp102. NADP(+) is bound by residues 127 to 131 (GAGGA), 151 to 156 (NRTASK), and Met221. Tyr223 serves as a coordination point for shikimate. Gly245 serves as a coordination point for NADP(+).

Belongs to the shikimate dehydrogenase family. In terms of assembly, homodimer.

The enzyme catalyses shikimate + NADP(+) = 3-dehydroshikimate + NADPH + H(+). It functions in the pathway metabolic intermediate biosynthesis; chorismate biosynthesis; chorismate from D-erythrose 4-phosphate and phosphoenolpyruvate: step 4/7. In terms of biological role, involved in the biosynthesis of the chorismate, which leads to the biosynthesis of aromatic amino acids. Catalyzes the reversible NADPH linked reduction of 3-dehydroshikimate (DHSA) to yield shikimate (SA). This chain is Shikimate dehydrogenase (NADP(+)), found in Saccharophagus degradans (strain 2-40 / ATCC 43961 / DSM 17024).